A 248-amino-acid chain; its full sequence is Gamma-interferon-inducible lysosomal thiol reductase (248 aa).

An N-terminal signal peptide occupies residues M1 to T26. A propeptide spans A27 to P54 (removed in mature form). Residues C69 and C72 are joined by a disulfide bond. 2 N-linked (GlcNAc...) asparagine glycosylation sites follow: N92 and N105. Positions K231–K248 are cleaved as a propeptide — removed in mature form.

It belongs to the GILT family. Dimer; disulfide-linked. Post-translationally, N-glycosylated. Sugar chains contain mannose-6-phosphate. In terms of processing, synthesized as a 35 kDa precursor which is then processed into the mature 30 kDa form via cleavage of N-terminal and C-terminal propeptides. Processing of the precursor is mediated by multiple lysosomal proteases.

The protein localises to the secreted. It is found in the lysosome. In terms of biological role, lysosomal thiol reductase that can reduce protein disulfide bonds. May facilitate the complete unfolding of proteins destined for lysosomal degradation. Plays an important role in antigen processing. Facilitates the generation of MHC class II-restricted epitodes from disulfide bond-containing antigen by the endocytic reduction of disulfide bonds. Also facilitates MHC class I-restricted recognition of exogenous antigens containing disulfide bonds by CD8+ T-cells or crosspresentation. This is Gamma-interferon-inducible lysosomal thiol reductase (Ifi30) from Mus musculus (Mouse).